Reading from the N-terminus, the 76-residue chain is Large ribosomal subunit protein bL31 (76 aa).

The protein belongs to the bacterial ribosomal protein bL31 family. Type A subfamily. As to quaternary structure, part of the 50S ribosomal subunit.

Its function is as follows. Binds the 23S rRNA. In Beijerinckia indica subsp. indica (strain ATCC 9039 / DSM 1715 / NCIMB 8712), this protein is Large ribosomal subunit protein bL31.